The chain runs to 272 residues: Insulin-like growth factor-binding protein 1 (272 aa).

An N-terminal signal peptide occupies residues 1–25 (MPEFLTVVSWPFLILLSFQVRVVAG). The IGFBP N-terminal domain occupies 28–109 (QPWHCAPCTA…TRGQGACVLE (82 aa)). 6 cysteine pairs are disulfide-bonded: Cys32–Cys59, Cys35–Cys61, Cys43–Cys62, Cys50–Cys65, Cys73–Cys86, and Cys80–Cys106. Residues 115 to 143 (TSSLSGSQHEEAKAAVASEDELAESPEMT) form a disordered region. The segment covering 132–143 (SEDELAESPEMT) has biased composition (acidic residues). A phosphoserine mark is found at Ser139, Ser157, and Ser169. Thr170 carries the phosphothreonine modification. The residue at position 171 (Tyr171) is a Phosphotyrosine. Residues 186 to 264 (KEPCQRELYK…SLETRGDPNC (79 aa)) enclose the Thyroglobulin type-1 domain. Cystine bridges form between Cys189–Cys219, Cys230–Cys241, and Cys243–Cys264. Phosphoserine is present on Ser255. The Cell attachment site signature appears at 259 to 261 (RGD).

As to quaternary structure, binds equally well IGF1 and IGF2. Interacts with integrin ITGA5:ITGB1. Interacts with VHL; this interaction inhibits HIF1A degradation.

It is found in the secreted. Its function is as follows. Multifunctional protein that plays a critical role in regulating the availability of IGFs such as IGF1 and IGF2 to their receptors and thereby regulates IGF-mediated cellular processes including cell migration, proliferation, differentiation or apoptosis in a cell-type specific manner. Also plays a positive role in cell migration by interacting with integrin ITGA5:ITGB1 through its RGD motif. Mechanistically, binding to integrins leads to activation of focal adhesion kinase/PTK2 and stimulation of the mitogen-activated protein kinase (MAPK) pathway. Regulates cardiomyocyte apoptosis by suppressing HIF-1alpha/HIF1A ubiquitination and subsequent degradation. The polypeptide is Insulin-like growth factor-binding protein 1 (Igfbp1) (Rattus norvegicus (Rat)).